The chain runs to 399 residues: O-glucosyltransferase rumi homolog (399 aa).

The first 18 residues, 1–18, serve as a signal peptide directing secretion; sequence MHFIIGIVICLSLSVIQS. Asn19 and Asn67 each carry an N-linked (GlcNAc...) asparagine glycan. Intrachain disulfides connect Cys66–Cys73, Cys71–Cys373, Cys118–Cys124, and Cys277–Cys300. Asp149 functions as the Proton donor/acceptor in the catalytic mechanism. Positions 189–194 are interaction with the consensus sequence C-X-S-X-[PA]-C in peptide substrates; sequence AIALYP. UDP-alpha-D-glucose is bound by residues 224 to 228, Arg232, 271 to 273, and 289 to 293; these read RGSRT, VTL, and AASFR.

This sequence belongs to the glycosyltransferase 90 family.

It localises to the endoplasmic reticulum lumen. The protein localises to the secreted. It functions in the pathway protein modification; protein glycosylation. Protein O-glucosyltransferase. Catalyzes the reaction that attaches glucose through an O-glycosidic linkage to a conserved serine residue found in the consensus sequence C-X-S-X-[PA]-C in epidermal growth factor-like repeats. Regulates Notch signaling by glucosylating Notch in the ER, glucosylation is required for the correct folding and cleavage of Notch. This chain is O-glucosyltransferase rumi homolog, found in Anopheles gambiae (African malaria mosquito).